A 188-amino-acid chain; its full sequence is UPF0398 protein SSP1297 (188 aa).

The protein belongs to the UPF0398 family.

This is UPF0398 protein SSP1297 from Staphylococcus saprophyticus subsp. saprophyticus (strain ATCC 15305 / DSM 20229 / NCIMB 8711 / NCTC 7292 / S-41).